The following is a 122-amino-acid chain: MIQQESRLKVADNSGAKELLCIRVLGGTRRKYAHIGDVIVCSVKSATPGGVVKKGQVVKAVVVRTTNTTRRKDGSYIKFDENAAVIIKDDKQPTGTRIFGPVARELRDKNFMKIVSLAPEVL.

Belongs to the universal ribosomal protein uL14 family. In terms of assembly, part of the 50S ribosomal subunit. Forms a cluster with proteins L3 and L19. In the 70S ribosome, L14 and L19 interact and together make contacts with the 16S rRNA in bridges B5 and B8.

Functionally, binds to 23S rRNA. Forms part of two intersubunit bridges in the 70S ribosome. This is Large ribosomal subunit protein uL14 from Alkaliphilus oremlandii (strain OhILAs) (Clostridium oremlandii (strain OhILAs)).